We begin with the raw amino-acid sequence, 580 residues long: MCSGPKSNLCSSRTLTEIESRQKEEETMLLLEFAACDDLDSFKREVEEKGLDLDESGLWYCRRVGSKKMGLEERTPLMVAAMYGSIKVLTFIVSTGKSDVNRACGEERVTPLHCAVAGCSVNMIEVINVLLDASALVNSVDANGNQPLDVFVRVSRFVASPRRKAVELLLRGGGVGGLIDEAVEEEIKIVSKYPADASLPDINEGVYGSDEFRMYSFKVKPCSRAYSHDWTECAFVHPGENARRRDPRKYPYTCVPCPEFRKGSCPKGDSCEYAHGVFESWLHPAQYKTRLCKDETGCARKVCFFAHKREEMRPVNASTGSAVAQSPFSSLEMMPGLSPLAYSSGVSTPPVSPMANGVPSSPRNGGSWQNRVNTLTPPALQLNGGSRLKSTLSARDIDMEMEMELRLRGFGNNVEETFGSYVSSPSRNSQMGQNMNQHYPSSPVRQPPSQHGFESSAAAAVAVMKARSTAFAKRSLSFKPATQAAPQSNLSDWGSPNGKLEWGMKGEELNKMRRSVSFGIHGNNNNNAARDYRDEPDVSWVNSLVKDSTVVSERSFGMNERVRIMSWAEQMYREKEQTVV.

2 ANK repeats span residues 72-102 and 107-139; these read EERT…DVNR and ERVT…LVNS. 2 consecutive C3H1-type zinc fingers follow at residues 251–278 and 286–310; these read PYTC…HGVF and QYKT…HKRE. The disordered stretch occupies residues 421–451; it reads YVSSPSRNSQMGQNMNQHYPSSPVRQPPSQH.

Expressed in roots and anthers.

It localises to the nucleus. In terms of biological role, involved in salt stress response. May positively modulate plant tolerance to salt stress. In Arabidopsis thaliana (Mouse-ear cress), this protein is Zinc finger CCCH domain-containing protein 47.